Reading from the N-terminus, the 154-residue chain is Myoglobin (154 aa).

Positions 2–148 (GLSDGEWQLV…FRNEMAAQYK (147 aa)) constitute a Globin domain. Ser4 bears the Phosphoserine mark. His65 serves as a coordination point for nitrite. His65 serves as a coordination point for O2. At Thr68 the chain carries Phosphothreonine. Residue His94 coordinates heme b.

In terms of assembly, monomeric.

The protein resides in the cytoplasm. Its subcellular location is the sarcoplasm. The enzyme catalyses Fe(III)-heme b-[protein] + nitric oxide + H2O = Fe(II)-heme b-[protein] + nitrite + 2 H(+). It catalyses the reaction H2O2 + AH2 = A + 2 H2O. In terms of biological role, monomeric heme protein which primary function is to store oxygen and facilitate its diffusion within muscle tissues. Reversibly binds oxygen through a pentacoordinated heme iron and enables its timely and efficient release as needed during periods of heightened demand. Depending on the oxidative conditions of tissues and cells, and in addition to its ability to bind oxygen, it also has a nitrite reductase activity whereby it regulates the production of bioactive nitric oxide. Under stress conditions, like hypoxia and anoxia, it also protects cells against reactive oxygen species thanks to its pseudoperoxidase activity. The chain is Myoglobin from Bubalus bubalis (Domestic water buffalo).